Consider the following 135-residue polypeptide: Nucleoside diphosphate kinase (135 aa).

Residues lysine 10, phenylalanine 58, arginine 86, threonine 92, arginine 103, and asparagine 113 each contribute to the ATP site. Residue histidine 116 is the Pros-phosphohistidine intermediate of the active site.

Belongs to the NDK family. As to quaternary structure, homotetramer. Mg(2+) is required as a cofactor.

The protein resides in the cytoplasm. It catalyses the reaction a 2'-deoxyribonucleoside 5'-diphosphate + ATP = a 2'-deoxyribonucleoside 5'-triphosphate + ADP. It carries out the reaction a ribonucleoside 5'-diphosphate + ATP = a ribonucleoside 5'-triphosphate + ADP. Functionally, major role in the synthesis of nucleoside triphosphates other than ATP. The ATP gamma phosphate is transferred to the NDP beta phosphate via a ping-pong mechanism, using a phosphorylated active-site intermediate. In Nocardioides sp. (strain ATCC BAA-499 / JS614), this protein is Nucleoside diphosphate kinase.